A 212-amino-acid chain; its full sequence is ER lumen protein-retaining receptor 2 (212 aa).

At 1 to 4 (MNIF) the chain is on the lumenal side. Residues 5-24 (RLTGDLSHLAAIVILLLKIW) traverse the membrane as a helical segment. The Cytoplasmic portion of the chain corresponds to 25–32 (KTRSCAGI). The helical transmembrane segment at 33–52 (SGKSQLLFALVFTTRYLDLF) threads the bilayer. An interaction with the K-D-E-L motif on target proteins region spans residues 47-48 (RY). Topologically, residues 53–58 (TSFISL) are lumenal. The chain crosses the membrane as a helical span at residues 59–79 (YNTSMKLIYIACSYATVYLIY). The Cytoplasmic portion of the chain corresponds to 80–92 (MKFKATYDGNHDT). The chain crosses the membrane as a helical span at residues 93–110 (FRVEFLVVPVGGLSFLVN). The Lumenal segment spans residues 111-116 (HDFSPL). The helical transmembrane segment at 117 to 135 (EILWTFSIYLESVAILPQL) threads the bilayer. Residues 136–149 (FMISKTGEAETITT) lie on the Cytoplasmic side of the membrane. The chain crosses the membrane as a helical span at residues 150 to 168 (HYLFFLGLYRALYLVNWIW). The interaction with the K-D-E-L motif on target proteins stretch occupies residues 159–169 (RALYLVNWIWR). Residues 169-178 (RFYFEGFFDL) are Lumenal-facing. The helical transmembrane segment at 179-199 (IAVVAGVVQTILYCDFFYLYI) threads the bilayer. At 200-212 (TKVLKGKKLSLPA) the chain is on the cytoplasmic side. Residues 204–207 (KGKK) form an important for recycling of cargo proteins with the sequence motif K-D-E-L from the Golgi to the endoplasmic reticulum region.

The protein belongs to the ERD2 family.

It localises to the endoplasmic reticulum membrane. Its subcellular location is the golgi apparatus membrane. The protein resides in the cytoplasmic vesicle. The protein localises to the COPI-coated vesicle membrane. Membrane receptor that binds the K-D-E-L sequence motif in the C-terminal part of endoplasmic reticulum resident proteins and maintains their localization in that compartment by participating to their vesicle-mediated recycling back from the Golgi. Binding is pH dependent, and is optimal at pH 5-5.4. The sequence is that of ER lumen protein-retaining receptor 2 (Kdelr2) from Mus musculus (Mouse).